The chain runs to 422 residues: Vitamin D3 receptor (422 aa).

Residues 22 to 90 (PRICGVCGDK…RLKRCVDIGM (69 aa)) constitute a DNA-binding region (nuclear receptor). Zn(2+) contacts are provided by Cys-25, Cys-28, Cys-42, Cys-45, Cys-61, Cys-67, Cys-77, and Cys-80. 2 NR C4-type zinc fingers span residues 25–45 (CGVCGDKATGFHFNAMTCEGC) and 61–85 (CPFNGDCRITKDNRRHCQSCRLKRC). Residues 98–127 (DEEVQRKRQMINKRKSEEALKESMRPKISD) form a hinge region. Residues 128–418 (EQQKMIDILL…LTPLMLEVFS (291 aa)) enclose the NR LBD domain. The tract at residues 170–191 (RSSSVHTQGSPSEDSDVFTSSP) is disordered. Ser-232 contributes to the calcitriol binding site. The interaction with coactivator LXXLL motif stretch occupies residues 241–259 (KMIPGFRDLIAEDQIALLK). Residues Arg-269, Ser-273, His-300, and His-392 each coordinate calcitriol. The 9aaTAD motif lies at 411–419 (PLMLEVFSD).

It belongs to the nuclear hormone receptor family. NR1 subfamily. As to quaternary structure, homodimer in the absence of bound vitamin D3. Heterodimer with RXRA after vitamin D3 binding. As to expression, detected in all tissues examined. Highest level in small intestine and skin.

The protein localises to the nucleus. The protein resides in the cytoplasm. In terms of biological role, nuclear receptor for calcitriol, the active form of vitamin D3 which mediates the action of this vitamin on cells. Enters the nucleus upon vitamin D3 binding where it forms heterodimers with the retinoid X receptor/RXR. The VDR-RXR heterodimers bind to specific response elements on DNA and activate the transcription of vitamin D3-responsive target genes. Plays a central role in calcium homeostasis. Also functions as a receptor for the secondary bile acid lithocholic acid (LCA) and its metabolites. This is Vitamin D3 receptor (vdr) from Xenopus laevis (African clawed frog).